A 734-amino-acid polypeptide reads, in one-letter code: Photosystem I P700 chlorophyll a apoprotein A2 (734 aa).

Transmembrane regions (helical) follow at residues 46–69 (IFASHFGQLAIIFLWTSGNLFHVA), 135–158 (LYTGALFLLFLSALSLIGGWLHLQ), 175–199 (LNHHLSGLFGVSSLAWTGHLVHVAI), 273–291 (MAHHHLAIAILFLIAGHMY), 330–353 (IHFQLGLALASLGVITSLVAQHMY), 369–395 (AALYTHHQYIAGFIMTGAFAHGAIFFI), 417–439 (AIISHLSWASLFLGFHTLGLYVH), and 517–535 (FLVHHAIALGLHTTTLILV). Positions 559 and 568 each coordinate [4Fe-4S] cluster. A run of 2 helical transmembrane segments spans residues 575–596 (AFYLAVFWMLNTIGWVTFYWHW) and 643–665 (LSVWAWMFLFGHLVWATGFMFLI). Chlorophyll a-binding residues include His-654, Met-662, and Tyr-670. Residue Trp-671 coordinates phylloquinone. A helical membrane pass occupies residues 707–727 (LVGLAHFSVGYIFTYAAFLIA).

Belongs to the PsaA/PsaB family. In terms of assembly, the PsaA/B heterodimer binds the P700 chlorophyll special pair and subsequent electron acceptors. PSI consists of a core antenna complex that captures photons, and an electron transfer chain that converts photonic excitation into a charge separation. The eukaryotic PSI reaction center is composed of at least 11 subunits. The cofactor is P700 is a chlorophyll a/chlorophyll a' dimer, A0 is one or more chlorophyll a, A1 is one or both phylloquinones and FX is a shared 4Fe-4S iron-sulfur center..

The protein localises to the plastid. The protein resides in the chloroplast thylakoid membrane. It carries out the reaction reduced [plastocyanin] + hnu + oxidized [2Fe-2S]-[ferredoxin] = oxidized [plastocyanin] + reduced [2Fe-2S]-[ferredoxin]. Functionally, psaA and PsaB bind P700, the primary electron donor of photosystem I (PSI), as well as the electron acceptors A0, A1 and FX. PSI is a plastocyanin-ferredoxin oxidoreductase, converting photonic excitation into a charge separation, which transfers an electron from the donor P700 chlorophyll pair to the spectroscopically characterized acceptors A0, A1, FX, FA and FB in turn. Oxidized P700 is reduced on the lumenal side of the thylakoid membrane by plastocyanin. The chain is Photosystem I P700 chlorophyll a apoprotein A2 from Capsella bursa-pastoris (Shepherd's purse).